The following is a 325-amino-acid chain: Ribosomal RNA small subunit methyltransferase H (325 aa).

Residues 39–41 (GGH), Asp59, Phe90, Asp108, and Gln115 each bind S-adenosyl-L-methionine.

This sequence belongs to the methyltransferase superfamily. RsmH family.

The protein localises to the cytoplasm. The enzyme catalyses cytidine(1402) in 16S rRNA + S-adenosyl-L-methionine = N(4)-methylcytidine(1402) in 16S rRNA + S-adenosyl-L-homocysteine + H(+). Functionally, specifically methylates the N4 position of cytidine in position 1402 (C1402) of 16S rRNA. This Leptothrix cholodnii (strain ATCC 51168 / LMG 8142 / SP-6) (Leptothrix discophora (strain SP-6)) protein is Ribosomal RNA small subunit methyltransferase H.